We begin with the raw amino-acid sequence, 550 residues long: Atherin (550 aa).

Positions 1-11 are enriched in pro residues; it reads MAGPPALPPPE. Disordered regions lie at residues 1–32 and 93–468; these read MAGP…SPHY and SYRN…KEKP. Residues 12-30 show a composition bias toward low complexity; the sequence is TAAAATTAAAAASSSAASP. Positions 24-100 constitute an SAMD1-like winged helix (WH) domain; sequence SSSAASPHYQ…SISYRNAARV (77 aa). Threonine 108 bears the Phosphothreonine mark. A compositionally biased stretch (pro residues) spans 125–138; it reads APPPTPAPPPPPAP. Low complexity predominate over residues 139–160; it reads VAAAAAPARAPRAAAAAAAATA. Serine 163 is modified (phosphoserine). A compositionally biased stretch (low complexity) spans 170-179; sequence GPRAQRAAPL. Pro residues-rich tracts occupy residues 180–205 and 214–245; these read AAPP…PPPA and PLPP…PPPE. The segment covering 246 to 257 has biased composition (low complexity); the sequence is GGAARAGGPARP. Serine 270 is modified (phosphoserine). Positions 290-300 are enriched in basic and acidic residues; it reads AAARGRLERTR. Positions 337–355 are enriched in acidic residues; sequence KEEEEEEEEDDEDDDDDVV. Positions 437–448 are enriched in pro residues; it reads SPSPVPLPPGKP. The SAM domain maps to 474 to 542; it reads WTVMDVVEYF…KVLQQGHFED (69 aa).

Homopolymerize into a closed pentameric ring. Interacts (via SAM domain) with L3MBTL3 (via SAM domain); the interaction mediates L3MBTL3 binding to chromatin. Interacts (via WH domain) with KDM1A; the interaction modulates KDM1A function.

The protein localises to the nucleus. The protein resides in the chromosome. It localises to the secreted. In terms of biological role, unmethylated CpG islands (CGIs)-binding protein which localizes to H3K4me3-decorated CGIs, where it acts as a transcriptional repressor. Tethers L3MBTL3 to chromatin and interacts with the KDM1A histone demethylase complex to modulate H3K4me2 and H3K4me3 levels at CGIs. Plays a role in atherogenesis by binding with LDL on cell surface and promoting LDL oxidation which leads to the formation of foam cell. This is Atherin (SAMD1) from Oryctolagus cuniculus (Rabbit).